The following is a 720-amino-acid chain: Serine/threonine-protein kinase KIN82 (720 aa).

Polar residues-rich tracts occupy residues 1–13 (MTQQ…SQRL) and 99–116 (FNHN…STSE). Disordered stretches follow at residues 1–20 (MTQQ…RSMS) and 99–128 (FNHN…RSTI). Phosphoserine is present on Ser203. Residues 230 to 241 (SPLANLSLSNSP) are compositionally biased toward low complexity. Residues 230 to 257 (SPLANLSLSNSPIDSPRKNSETRKDQIP) are disordered. Basic and acidic residues predominate over residues 244–255 (SPRKNSETRKDQ). A Protein kinase domain is found at 324–602 (FEKIRLLGQG…AADIKRHPFF (279 aa)). ATP-binding positions include 330–338 (LGQGDVGKV) and Lys353. Asp449 acts as the Proton acceptor in catalysis.

This sequence belongs to the protein kinase superfamily. Ser/Thr protein kinase family. KIN82 subfamily.

It carries out the reaction L-seryl-[protein] + ATP = O-phospho-L-seryl-[protein] + ADP + H(+). The catalysed reaction is L-threonyl-[protein] + ATP = O-phospho-L-threonyl-[protein] + ADP + H(+). Flippase activator that phosphorylates DFN1 and DFN2 and which is involved in the generation of phospholipid asymmetry in membranes by the inward translocation of phospholipids. The polypeptide is Serine/threonine-protein kinase KIN82 (KIN82) (Saccharomyces cerevisiae (strain ATCC 204508 / S288c) (Baker's yeast)).